The following is a 266-amino-acid chain: MRLIPLVTAEQVGKWAARHIVNRINAFKPTADRPFVLGLPTGGTPLTAYKALVEMHKAGQVSFKHVVTFNMDEYVGLPKEHPESYHSFMHRNFFDHVDIPAENINLLNGNAPDIDAECRRYEEKIRSYGKIHLFMGGVGNDGHIAFNEPASSLASRTRIKTLTHDTRVANSRFFDGDVDLVPKYALTVGVGTLLDAEEVMILVLGHQKALALQAAVEGNVNHMWTITCLQLHPKAVIVCDEPSTMELKVKTLKYFNELEAENIKGL.

Asp72 functions as the Proton acceptor; for enolization step in the catalytic mechanism. Asp141 acts as the For ring-opening step in catalysis. The Proton acceptor; for ring-opening step role is filled by His143. Glu148 serves as the catalytic For ring-opening step.

This sequence belongs to the glucosamine/galactosamine-6-phosphate isomerase family. NagB subfamily. As to quaternary structure, homohexamer.

The catalysed reaction is alpha-D-glucosamine 6-phosphate + H2O = beta-D-fructose 6-phosphate + NH4(+). The protein operates within amino-sugar metabolism; N-acetylneuraminate degradation; D-fructose 6-phosphate from N-acetylneuraminate: step 5/5. Its activity is regulated as follows. Allosterically activated by N-acetylglucosamine 6-phosphate (GlcNAc6P). Functionally, catalyzes the reversible isomerization-deamination of glucosamine 6-phosphate (GlcN6P) to form fructose 6-phosphate (Fru6P) and ammonium ion. This chain is Glucosamine-6-phosphate deaminase, found in Klebsiella pneumoniae (strain 342).